A 302-amino-acid chain; its full sequence is Lipoyl synthase (302 aa).

Residues Cys-44, Cys-49, Cys-55, Cys-70, Cys-74, Cys-77, and Ser-283 each coordinate [4Fe-4S] cluster. The Radical SAM core domain maps to 56-272 (WSKKHATVMI…ARVAKSKGFL (217 aa)).

Belongs to the radical SAM superfamily. Lipoyl synthase family. Requires [4Fe-4S] cluster as cofactor.

It localises to the cytoplasm. It catalyses the reaction [[Fe-S] cluster scaffold protein carrying a second [4Fe-4S](2+) cluster] + N(6)-octanoyl-L-lysyl-[protein] + 2 oxidized [2Fe-2S]-[ferredoxin] + 2 S-adenosyl-L-methionine + 4 H(+) = [[Fe-S] cluster scaffold protein] + N(6)-[(R)-dihydrolipoyl]-L-lysyl-[protein] + 4 Fe(3+) + 2 hydrogen sulfide + 2 5'-deoxyadenosine + 2 L-methionine + 2 reduced [2Fe-2S]-[ferredoxin]. It participates in protein modification; protein lipoylation via endogenous pathway; protein N(6)-(lipoyl)lysine from octanoyl-[acyl-carrier-protein]: step 2/2. Functionally, catalyzes the radical-mediated insertion of two sulfur atoms into the C-6 and C-8 positions of the octanoyl moiety bound to the lipoyl domains of lipoate-dependent enzymes, thereby converting the octanoylated domains into lipoylated derivatives. This is Lipoyl synthase from Orientia tsutsugamushi (strain Ikeda) (Rickettsia tsutsugamushi).